Consider the following 352-residue polypeptide: C-X-C chemokine receptor type 4 (352 aa).

An important for chemokine binding and signaling region spans residues 1-21 (MEGISIYTSDNYTEEMGSGDY). Residues 1-38 (MEGISIYTSDNYTEEMGSGDYDSMKEPCFREENANFNK) lie on the Extracellular side of the membrane. Residue Tyr7 is modified to Sulfotyrosine. N-linked (GlcNAc...) asparagine glycosylation is present at Asn11. Residue Tyr12 is modified to Sulfotyrosine. Residue Ser18 is glycosylated (O-linked (Xyl...) (chondroitin sulfate) serine). Position 21 is a sulfotyrosine (Tyr21). 2 disulfides stabilise this stretch: Cys28–Cys274 and Cys109–Cys186. The helical transmembrane segment at 39-63 (IFLPTIYSIIFLTGIVGNGLVILVM) threads the bilayer. Topologically, residues 64–77 (GYQKKLRSMTDKYR) are cytoplasmic. A helical transmembrane segment spans residues 78–99 (LHLSVADLLFVITLPFWAVDAV). Residues 94 to 97 (WAVD) are chemokine binding. At 100–110 (ANWYFGNFLCK) the chain is on the extracellular side. Residues 111 to 130 (AVHVIYTVNLYSSVLILAFI) form a helical membrane-spanning segment. The interval 113–117 (HVIYT) is chemokine binding. Residues 131-154 (SLDRYLAIVHATNSQRPRKLLAEK) lie on the Cytoplasmic side of the membrane. Positions 133–135 (DRY) match the Important for signaling motif. The interval 135-147 (YLAIVHATNSQRP) is involved in dimerization; when bound to chemokine. Residues 155-174 (VVYVGVWIPALLLTIPDFIF) traverse the membrane as a helical segment. Residues 175-195 (ANVSEADDRYICDRFYPNDLW) are Extracellular-facing. The interval 186–190 (CDRFY) is chemokine binding, important for signaling. Positions 191-210 (PNDLWVVVFQFQHIMVGLIL) are involved in dimerization. Residues 196–216 (VVVFQFQHIMVGLILPGIVIL) traverse the membrane as a helical segment. Residues 217-241 (SCYCIIISKLSHSKGHQKRKALKTT) are Cytoplasmic-facing. The chain crosses the membrane as a helical span at residues 242-261 (VILILAFFACWLPYYIGISI). Residues 262-282 (DSFILLEIIKQGCEFENTVHK) lie on the Extracellular side of the membrane. An involved in dimerization region spans residues 266–268 (LLE). The chain crosses the membrane as a helical span at residues 283-302 (WISITEALAFFHCCLNPILY). Residues 303–352 (AFLGAKFKTSAQHALTSVSRGSSLKILSKGKRGGHSSVSTESESSSFHSS) lie on the Cytoplasmic side of the membrane. Ser319 and Ser321 each carry phosphoserine. Phosphoserine; by PKC and GRK6 occurs at positions 324 and 325. The segment at 329–352 (LSKGKRGGHSSVSTESESSSFHSS) is disordered. Ser330 carries the post-translational modification Phosphoserine; by GRK6. Lys331 participates in a covalent cross-link: Glycyl lysine isopeptide (Lys-Gly) (interchain with G-Cter in ubiquitin). The segment covering 337-352 (HSSVSTESESSSFHSS) has biased composition (low complexity). Residue Ser339 is modified to Phosphoserine; by GRK6. Phosphoserine is present on residues Ser348 and Ser351.

This sequence belongs to the G-protein coupled receptor 1 family. In terms of assembly, monomer. Can form homodimers. Interacts with CD164. Interacts with ARRB2; the interaction is dependent on the C-terminal phosphorylation of CXCR4 and allows activation of MAPK1 and MAPK3. Interacts with ARR3; the interaction is dependent on the C-terminal phosphorylation of CXCR4 and modulates calcium mobilization. Interacts with RNF113A; the interaction, enhanced by CXCL12, promotes CXCR4 ubiquitination and subsequent degradation. Interacts (via the cytoplasmic C-terminal) with ITCH (via the WW domains I and II); the interaction, enhanced by CXCL12, promotes CXCR4 ubiquitination and leads to its degradation. Interacts with extracellular ubiquitin. Interacts with DBN1; this interaction is enhanced by antigenic stimulation. Following LPS binding, may form a complex with GDF5, HSP90AA1 and HSPA8. Phosphorylated on agonist stimulation. Rapidly phosphorylated on serine and threonine residues in the C-terminal. Phosphorylation at Ser-324 and Ser-325 leads to recruitment of ITCH, ubiquitination and protein degradation. In terms of processing, ubiquitinated after ligand binding, leading to its degradation. Ubiquitinated by ITCH at the cell membrane on agonist stimulation. The ubiquitin-dependent mechanism, endosomal sorting complex required for transport (ESCRT), then targets CXCR4 for lysosomal degradation. This process is dependent also on prior Ser-/Thr-phosphorylation in the C-terminal of CXCR4. Also binding of ARRB1 to STAM negatively regulates CXCR4 sorting to lysosomes though modulating ubiquitination of SFR5S. Post-translationally, sulfation is required for efficient binding of CXCL12/SDF-1alpha and promotes its dimerization. O- and N-glycosylated. N-glycosylation can mask coreceptor function. The O-glycosylation chondroitin sulfate attachment does not affect interaction with CXCL12/SDF-1alpha nor its coreceptor activity.

Its subcellular location is the cell membrane. The protein localises to the cell junction. The protein resides in the early endosome. It is found in the late endosome. It localises to the lysosome. Functionally, receptor for the C-X-C chemokine CXCL12/SDF-1 that transduces a signal by increasing intracellular calcium ion levels and enhancing MAPK1/MAPK3 activation. Involved in the AKT signaling cascade. Plays a role in regulation of cell migration, e.g. during wound healing. Acts as a receptor for extracellular ubiquitin; leading to enhanced intracellular calcium ions and reduced cellular cAMP levels. Binds bacterial lipopolysaccharide (LPS) et mediates LPS-induced inflammatory response, including TNF secretion by monocytes. Involved in hematopoiesis and in cardiac ventricular septum formation. Also plays an essential role in vascularization of the gastrointestinal tract, probably by regulating vascular branching and/or remodeling processes in endothelial cells. Involved in cerebellar development. In the CNS, could mediate hippocampal-neuron survival. The protein is C-X-C chemokine receptor type 4 (CXCR4) of Pan troglodytes (Chimpanzee).